We begin with the raw amino-acid sequence, 124 residues long: Pal-related lipoprotein (124 aa).

The signal sequence occupies residues 1–18; it reads MRYRAVFPMLIIVFALSG. Cys19 carries the N-palmitoyl cysteine lipid modification. Cys19 is lipidated: S-diacylglycerol cysteine.

Its subcellular location is the cell membrane. The chain is Pal-related lipoprotein (slp) from Bacillus subtilis (strain 168).